A 344-amino-acid polypeptide reads, in one-letter code: Beta-1,4-galactosyltransferase 4 (344 aa).

Over 1 to 12 (MGCNPPYHLSYR) the chain is Cytoplasmic. The chain crosses the membrane as a helical; Signal-anchor for type II membrane protein span at residues 13-38 (LRLLLLFTLCLTVVGWATSNYFVGAI). The Lumenal portion of the chain corresponds to 39–344 (QVIPKAKDFM…NITVDFWTAA (306 aa)). A disulfide bridge connects residues C77 and C118. UDP-alpha-D-galactose-binding positions include 129-133 (PHRNR), 168-170 (FNR), and 195-196 (VD). C189 and C208 form a disulfide bridge. D196 provides a ligand contact to Mn(2+). N-linked (GlcNAc...) asparagine glycosylation occurs at N220. UDP-alpha-D-galactose-binding residues include Y224 and W256. 258-261 (GEDD) contacts N-acetyl-D-glucosamine. Residue H289 coordinates Mn(2+). A UDP-alpha-D-galactose-binding site is contributed by 289–291 (HTR). R301 serves as a coordination point for N-acetyl-D-glucosamine. N335 is a glycosylation site (N-linked (GlcNAc...) asparagine).

It belongs to the glycosyltransferase 7 family. Interacts with SLC35A2/UGT1. Mn(2+) serves as cofactor.

The protein resides in the golgi apparatus membrane. Its subcellular location is the secreted. The enzyme catalyses N-acetyl-D-glucosamine + UDP-alpha-D-galactose = beta-D-galactosyl-(1-&gt;4)-N-acetyl-D-glucosamine + UDP + H(+). The catalysed reaction is a beta-D-GlcNAc-(1-&gt;3)-beta-D-Gal-(1-&gt;4)-beta-D-Glc-(1&lt;-&gt;1)-Cer(d18:1(4E)) + UDP-alpha-D-galactose = a neolactoside nLc4Cer(d18:1(4E)) + UDP + H(+). It catalyses the reaction 3-O-{beta-D-galactosyl-(1-&gt;3)-[6-O-sulfo-N-acetyl-beta-D-glucosaminyl-(1-&gt;6)]-N-acetyl-alpha-D-galactosaminyl}-L-seryl-[protein] + UDP-alpha-D-galactose = 3-O-{beta-D-galactosyl-(1-&gt;3)-[beta-D-galactosyl-(1-&gt;4)-6-O-sulfo-N-acetyl-beta-D-glucosaminyl-(1-&gt;6)]-N-acetyl-alpha-D-galactosaminyl}-L-seryl-[protein] + UDP + H(+). It carries out the reaction 3-O-{beta-D-galactosyl-(1-&gt;3)-[6-O-sulfo-N-acetyl-beta-D-glucosaminyl-(1-&gt;6)]-N-acetyl-alpha-D-galactosaminyl}-L-threonyl-[protein] + UDP-alpha-D-galactose = 3-O-{beta-D-galactosyl-(1-&gt;3)-[beta-D-galactosyl-(1-&gt;4)-6-O-sulfo-N-acetyl-beta-D-glucosaminyl-(1-&gt;6)]-N-acetyl-alpha-D-galactosaminyl}-L-threonyl-[protein] + UDP + H(+). It functions in the pathway protein modification; protein glycosylation. It participates in glycolipid biosynthesis. Galactose (Gal) transferase involved in the synthesis of terminal N-acetyllactosamine (LacNac) unit present on glycan chains of glycoproteins and glycosphingolipids. Catalyzes the transfer of Gal residue via a beta1-&gt;4 linkage from UDP-Gal to the non-reducing terminal N-acetyl glucosamine 6-O-sulfate (6-O-sulfoGlcNAc) in the linearly growing chain of both N- and O-linked keratan sulfate proteoglycans. Cooperates with B3GNT7 N-acetyl glucosamine transferase and CHST6 and CHST1 sulfotransferases to construct and elongate mono- and disulfated disaccharide units [-&gt;3Galbeta1-&gt;4(6-sulfoGlcNAcbeta)1-&gt;] and [-&gt;3(6-sulfoGalbeta)1-&gt;4(6-sulfoGlcNAcbeta)1-&gt;] within keratan sulfate polymer. Transfers Gal residue via a beta1-&gt;4 linkage to terminal 6-O-sulfoGlcNAc within the LacNac unit of core 2 O-glycans forming 6-sulfo-sialyl-Lewis X (sLex). May contribute to the generation of sLex epitope on mucin-type glycoproteins that serve as ligands for SELL/L-selectin, a major regulator of leukocyte migration. In the biosynthesis pathway of neolacto-series glycosphingolipids, transfers Gal residue via a beta1-&gt;4 linkage to terminal GlcNAc of a lactotriaosylceramide (Lc3Cer) acceptor to form a neolactotetraosylceramide. The chain is Beta-1,4-galactosyltransferase 4 from Mus musculus (Mouse).